Here is a 526-residue protein sequence, read N- to C-terminus: Protein translocase subunit SecD (526 aa).

The next 6 helical transmembrane spans lie at 8–28, 356–376, 379–399, 405–425, 453–473, and 478–498; these read LIVFIFALLLGVGFSVPSLLE, IIALVGGFILVMGFMALYYSM, VIACMALVVNLFLIVAVMAIF, LPGMAGIVLTVGIAVDANIII, AIFDSNITSLIASVLLYAYGT, and GFALTTGIGILASIITAIIGT.

This sequence belongs to the SecD/SecF family. SecD subfamily. As to quaternary structure, forms a complex with SecF. Part of the essential Sec protein translocation apparatus which comprises SecA, SecYEG and auxiliary proteins SecDF-YajC and YidC.

It is found in the cell inner membrane. Its function is as follows. Part of the Sec protein translocase complex. Interacts with the SecYEG preprotein conducting channel. SecDF uses the proton motive force (PMF) to complete protein translocation after the ATP-dependent function of SecA. The sequence is that of Protein translocase subunit SecD from Helicobacter pylori (strain J99 / ATCC 700824) (Campylobacter pylori J99).